The following is a 1441-amino-acid chain: Envelopment polyprotein (1441 aa).

Residues 1-13 form the signal peptide; that stretch reads MICILVLITVAAA. At 14–200 the chain is on the lumenal side; that stretch reads SPVYQRCFQD…GSIANSICQN (187 aa). An N-linked (GlcNAc...) asparagine; by host glycan is attached at N57. At 201–221 the chain is embedded in the membrane; sequence IEIIILVTLTLLIFILLSILS. Topologically, residues 222–305 are cytoplasmic; it reads KTYICYLLMP…RAARVMCKSK (84 aa). Positions 306 to 326 form a transmembrane segment; it reads GPASILSIITAVLVLTFVTPI. The Lumenal portion of the chain corresponds to 327–361; the sequence is NSMVLGESKETFELEDLPDDMLEMASRINSYYLTC. The chain crosses the lipid bilayer at residues 362 to 382; it reads ILNYAVSWGLVIIGLLIGLLF. Topologically, residues 383 to 450 are cytoplasmic; the sequence is KKYQHRFLNV…NCLVQYKAKW (68 aa). At 451-471 the chain is embedded in the membrane; the sequence is MMNFLIIYIFLILIKDSAIVV. The Lumenal segment spans residues 472 to 1395; the sequence is QAAGTDFTTC…EPFKNLFGSY (924 aa). N490 carries N-linked (GlcNAc...) asparagine; by host glycosylation. Residues 1066–1087 are fusion peptide; it reads WGCEEFGCLAVSDGCVFGSCQD. N1177 carries an N-linked (GlcNAc...) asparagine; by host glycan. The hydrophobic stretch at 1396 to 1416 threads the membrane; sequence IGIFYTFIISIVVLLVIIYVL. Residues 1417-1433 lie on the Cytoplasmic side of the membrane; that stretch reads LPICFKLRDTLRKHEDA.

The protein belongs to the orthobunyaviruses M polyprotein family. In terms of assembly, glycoprotein C and Glycoprotein N interact with each other.

Its subcellular location is the virion membrane. The protein resides in the host Golgi apparatus membrane. It is found in the host endoplasmic reticulum membrane. Functionally, glycoprotein C and glycoprotein N interact with each other and are present at the surface of the virion. They are able to attach the virion to a cell receptor and to promote fusion of membranes after endocytosis of the virion. The sequence is that of Envelopment polyprotein (GP) from Bunyavirus La Crosse (isolate Human/United States/L78/1978).